The sequence spans 211 residues: Large ribosomal subunit protein uL3 (211 aa).

Position 150 is an N5-methylglutamine (Gln150).

The protein belongs to the universal ribosomal protein uL3 family. In terms of assembly, part of the 50S ribosomal subunit. Forms a cluster with proteins L14 and L19. In terms of processing, methylated by PrmB.

In terms of biological role, one of the primary rRNA binding proteins, it binds directly near the 3'-end of the 23S rRNA, where it nucleates assembly of the 50S subunit. The chain is Large ribosomal subunit protein uL3 from Pseudomonas savastanoi pv. phaseolicola (strain 1448A / Race 6) (Pseudomonas syringae pv. phaseolicola (strain 1448A / Race 6)).